The chain runs to 296 residues: 4-hydroxy-tetrahydrodipicolinate synthase (296 aa).

T44 serves as a coordination point for pyruvate. Y132 acts as the Proton donor/acceptor in catalysis. K162 (schiff-base intermediate with substrate) is an active-site residue. I204 contacts pyruvate.

It belongs to the DapA family. In terms of assembly, homotetramer; dimer of dimers.

It localises to the cytoplasm. It carries out the reaction L-aspartate 4-semialdehyde + pyruvate = (2S,4S)-4-hydroxy-2,3,4,5-tetrahydrodipicolinate + H2O + H(+). It functions in the pathway amino-acid biosynthesis; L-lysine biosynthesis via DAP pathway; (S)-tetrahydrodipicolinate from L-aspartate: step 3/4. Catalyzes the condensation of (S)-aspartate-beta-semialdehyde [(S)-ASA] and pyruvate to 4-hydroxy-tetrahydrodipicolinate (HTPA). In Novosphingobium aromaticivorans (strain ATCC 700278 / DSM 12444 / CCUG 56034 / CIP 105152 / NBRC 16084 / F199), this protein is 4-hydroxy-tetrahydrodipicolinate synthase.